A 382-amino-acid polypeptide reads, in one-letter code: Chorismate synthase (382 aa).

2 residues coordinate NADP(+): R39 and R45. Residues 127–129 (RAS), 245–246 (QA), G290, 305–309 (KPIPT), and R331 contribute to the FMN site.

The protein belongs to the chorismate synthase family. In terms of assembly, homotetramer. Requires FMNH2 as cofactor.

The catalysed reaction is 5-O-(1-carboxyvinyl)-3-phosphoshikimate = chorismate + phosphate. It functions in the pathway metabolic intermediate biosynthesis; chorismate biosynthesis; chorismate from D-erythrose 4-phosphate and phosphoenolpyruvate: step 7/7. Its function is as follows. Catalyzes the anti-1,4-elimination of the C-3 phosphate and the C-6 proR hydrogen from 5-enolpyruvylshikimate-3-phosphate (EPSP) to yield chorismate, which is the branch point compound that serves as the starting substrate for the three terminal pathways of aromatic amino acid biosynthesis. This reaction introduces a second double bond into the aromatic ring system. This chain is Chorismate synthase, found in Desulfitobacterium hafniense (strain Y51).